A 168-amino-acid polypeptide reads, in one-letter code: Small ribosomal subunit protein uS9 (168 aa).

Residues M1–A11 are compositionally biased toward low complexity. The interval M1–R36 is disordered.

Belongs to the universal ribosomal protein uS9 family.

The protein is Small ribosomal subunit protein uS9 of Pseudarthrobacter chlorophenolicus (strain ATCC 700700 / DSM 12829 / CIP 107037 / JCM 12360 / KCTC 9906 / NCIMB 13794 / A6) (Arthrobacter chlorophenolicus).